We begin with the raw amino-acid sequence, 234 residues long: Adenosine 5'-phosphosulfate reductase (234 aa).

[4Fe-4S] cluster is bound by residues cysteine 120, cysteine 121, cysteine 203, and cysteine 206. Catalysis depends on cysteine 229, which acts as the Nucleophile; cysteine thiosulfonate intermediate.

This sequence belongs to the PAPS reductase family. CysH subfamily. [4Fe-4S] cluster serves as cofactor.

The protein resides in the cytoplasm. It catalyses the reaction [thioredoxin]-disulfide + sulfite + AMP + 2 H(+) = adenosine 5'-phosphosulfate + [thioredoxin]-dithiol. It functions in the pathway sulfur metabolism; hydrogen sulfide biosynthesis; sulfite from sulfate. Functionally, catalyzes the formation of sulfite from adenosine 5'-phosphosulfate (APS) using thioredoxin as an electron donor. This chain is Adenosine 5'-phosphosulfate reductase, found in Bacillus cereus (strain AH820).